The following is a 418-amino-acid chain: RapA guanosine triphosphatase-activating protein B (418 aa).

Residues 142 to 407 (LVKVCEPEFN…EKASALINVI (266 aa)) form the Rap-GAP domain. Residues 304–339 (NRVVGEQPSPSLTTTTTTTTTTSPTINSNSPTPSNK) are disordered. Positions 311 to 338 (PSPSLTTTTTTTTTTSPTINSNSPTPSN) are enriched in low complexity.

Functionally, mediates the deactivation of rap1 during multicellular development and is required for normal morphogenesis. Also required for the correct patterning of specific subtypes of prestalk cells. The sequence is that of RapA guanosine triphosphatase-activating protein B (rapgapB) from Dictyostelium discoideum (Social amoeba).